A 340-amino-acid polypeptide reads, in one-letter code: Adenosine deaminase (340 aa).

Zn(2+) is bound by residues H15 and H17. 3 residues coordinate substrate: H17, D19, and G172. Residue H199 participates in Zn(2+) binding. E202 serves as the catalytic Proton donor. D279 provides a ligand contact to Zn(2+).

Belongs to the metallo-dependent hydrolases superfamily. Adenosine and AMP deaminases family. Adenosine deaminase subfamily. Zn(2+) is required as a cofactor.

The catalysed reaction is adenosine + H2O + H(+) = inosine + NH4(+). The enzyme catalyses 2'-deoxyadenosine + H2O + H(+) = 2'-deoxyinosine + NH4(+). Its function is as follows. Catalyzes the hydrolytic deamination of adenosine and 2-deoxyadenosine. This chain is Adenosine deaminase, found in Streptococcus agalactiae serotype III (strain NEM316).